A 429-amino-acid polypeptide reads, in one-letter code: Histidine--tRNA ligase (429 aa).

This sequence belongs to the class-II aminoacyl-tRNA synthetase family. Homodimer.

Its subcellular location is the cytoplasm. It catalyses the reaction tRNA(His) + L-histidine + ATP = L-histidyl-tRNA(His) + AMP + diphosphate + H(+). The protein is Histidine--tRNA ligase of Oceanobacillus iheyensis (strain DSM 14371 / CIP 107618 / JCM 11309 / KCTC 3954 / HTE831).